Here is a 158-residue protein sequence, read N- to C-terminus: NAD(P)H-quinone oxidoreductase subunit J, chloroplastic (158 aa).

It belongs to the complex I 30 kDa subunit family. As to quaternary structure, NDH is composed of at least 16 different subunits, 5 of which are encoded in the nucleus.

Its subcellular location is the plastid. It is found in the chloroplast thylakoid membrane. It catalyses the reaction a plastoquinone + NADH + (n+1) H(+)(in) = a plastoquinol + NAD(+) + n H(+)(out). The enzyme catalyses a plastoquinone + NADPH + (n+1) H(+)(in) = a plastoquinol + NADP(+) + n H(+)(out). In terms of biological role, NDH shuttles electrons from NAD(P)H:plastoquinone, via FMN and iron-sulfur (Fe-S) centers, to quinones in the photosynthetic chain and possibly in a chloroplast respiratory chain. The immediate electron acceptor for the enzyme in this species is believed to be plastoquinone. Couples the redox reaction to proton translocation, and thus conserves the redox energy in a proton gradient. This is NAD(P)H-quinone oxidoreductase subunit J, chloroplastic from Crucihimalaya wallichii (Rock-cress).